Reading from the N-terminus, the 300-residue chain is MSNDKRTIYVGGLADEVTERLLNNAFIPFGDIADIQMPADYESQRHRGFAFIEYEQSEDAAAAIDNMNDSELCGRTIRVNLAKPVRVKEDSFKPIWADDDWLQKHAGATLQPEGEPEAEKVETPSTGPAVIEKAEKRNPQVFFDIRIGGNDAGRIVMLLRADVVPKTAENFRQLCTHEQGYGYKGCSFHRVIPEFMCQGGDFTNNNGTGGKSIYGKKFNDENFNLKHNSFGTLSMANSGANTNGSQFFICTTKTDWLDNKHVVFGHVISGAEVVRKMERCGSKSGTPSQKIVIYSCGELK.

The RRM domain occupies 6–84 (RTIYVGGLAD…RTIRVNLAKP (79 aa)). One can recognise a PPIase cyclophilin-type domain in the interval 142 to 298 (FFDIRIGGND…QKIVIYSCGE (157 aa)).

Belongs to the cyclophilin-type PPIase family. PPIase E subfamily.

Its subcellular location is the nucleus. The catalysed reaction is [protein]-peptidylproline (omega=180) = [protein]-peptidylproline (omega=0). PPIases accelerate the folding of proteins. It catalyzes the cis-trans isomerization of proline imidic peptide bonds in oligopeptides. Combines RNA-binding and PPIase activities. This is Peptidyl-prolyl cis-trans isomerase E (cyp33) from Drosophila melanogaster (Fruit fly).